The sequence spans 414 residues: Dual-specificity RNA methyltransferase RlmN (414 aa).

The span at 1–13 (MTSAVGISVPNTD) shows a compositional bias: polar residues. Positions 1–22 (MTSAVGISVPNTDAQSSQSASQ) are disordered. The active-site Proton acceptor is the Glu124. The 244-residue stretch at 134-377 (TGSRKTLCIS…CTIRQTRGDD (244 aa)) folds into the Radical SAM core domain. A disulfide bridge links Cys141 with Cys382. Cys148, Cys152, and Cys155 together coordinate [4Fe-4S] cluster. S-adenosyl-L-methionine contacts are provided by residues 204-205 (GE), Ser236, 258-260 (SLH), and Asn339. Residue Cys382 is the S-methylcysteine intermediate of the active site.

Belongs to the radical SAM superfamily. RlmN family. The cofactor is [4Fe-4S] cluster.

It localises to the cytoplasm. It carries out the reaction adenosine(2503) in 23S rRNA + 2 reduced [2Fe-2S]-[ferredoxin] + 2 S-adenosyl-L-methionine = 2-methyladenosine(2503) in 23S rRNA + 5'-deoxyadenosine + L-methionine + 2 oxidized [2Fe-2S]-[ferredoxin] + S-adenosyl-L-homocysteine. The catalysed reaction is adenosine(37) in tRNA + 2 reduced [2Fe-2S]-[ferredoxin] + 2 S-adenosyl-L-methionine = 2-methyladenosine(37) in tRNA + 5'-deoxyadenosine + L-methionine + 2 oxidized [2Fe-2S]-[ferredoxin] + S-adenosyl-L-homocysteine. Functionally, specifically methylates position 2 of adenine 2503 in 23S rRNA and position 2 of adenine 37 in tRNAs. m2A2503 modification seems to play a crucial role in the proofreading step occurring at the peptidyl transferase center and thus would serve to optimize ribosomal fidelity. The chain is Dual-specificity RNA methyltransferase RlmN from Acinetobacter baylyi (strain ATCC 33305 / BD413 / ADP1).